The sequence spans 627 residues: Phosphomethylpyrimidine synthase (627 aa).

Residues asparagine 233, methionine 262, tyrosine 291, histidine 327, 347 to 349 (SRG), 388 to 391 (DGLR), and glutamate 427 contribute to the substrate site. Histidine 431 provides a ligand contact to Zn(2+). Tyrosine 454 lines the substrate pocket. Residue histidine 495 coordinates Zn(2+). [4Fe-4S] cluster contacts are provided by cysteine 575, cysteine 578, and cysteine 583.

The protein belongs to the ThiC family. Homodimer. Requires [4Fe-4S] cluster as cofactor.

The enzyme catalyses 5-amino-1-(5-phospho-beta-D-ribosyl)imidazole + S-adenosyl-L-methionine = 4-amino-2-methyl-5-(phosphooxymethyl)pyrimidine + CO + 5'-deoxyadenosine + formate + L-methionine + 3 H(+). The protein operates within cofactor biosynthesis; thiamine diphosphate biosynthesis. Catalyzes the synthesis of the hydroxymethylpyrimidine phosphate (HMP-P) moiety of thiamine from aminoimidazole ribotide (AIR) in a radical S-adenosyl-L-methionine (SAM)-dependent reaction. The polypeptide is Phosphomethylpyrimidine synthase (Acidithiobacillus ferrooxidans (strain ATCC 23270 / DSM 14882 / CIP 104768 / NCIMB 8455) (Ferrobacillus ferrooxidans (strain ATCC 23270))).